The primary structure comprises 311 residues: 5'-adenylylsulfate reductase-like 3 (311 aa).

Positions 1-22 (MATRLLCWTALLLPIIAATAAA) are cleaved as a signal peptide. The region spanning 23–164 (SPLPEACPVP…LAAFYRDVSG (142 aa)) is the Thioredoxin domain. Asn139 is a glycosylation site (N-linked (GlcNAc...) asparagine). The helical transmembrane segment at 210 to 230 (LALATAFVILRLLYLLFPKIG) threads the bilayer. N-linked (GlcNAc...) asparagine glycans are attached at residues Asn281 and Asn305.

The protein localises to the membrane. The sequence is that of 5'-adenylylsulfate reductase-like 3 (APRL3) from Oryza sativa subsp. japonica (Rice).